Here is a 187-residue protein sequence, read N- to C-terminus: Ribosome maturation factor RimM (187 aa).

One can recognise a PRC barrel domain in the interval 94-168 (DDEFYHADLV…RVIVDMPDGL (75 aa)). A disordered region spans residues 167–187 (GLIGGDKPDTSDTAPLGQDFD).

Belongs to the RimM family. In terms of assembly, binds ribosomal protein uS19.

The protein resides in the cytoplasm. In terms of biological role, an accessory protein needed during the final step in the assembly of 30S ribosomal subunit, possibly for assembly of the head region. Essential for efficient processing of 16S rRNA. May be needed both before and after RbfA during the maturation of 16S rRNA. It has affinity for free ribosomal 30S subunits but not for 70S ribosomes. This Jannaschia sp. (strain CCS1) protein is Ribosome maturation factor RimM.